The chain runs to 220 residues: Cytidylate kinase (220 aa).

10-18 (GPAGAGKST) provides a ligand contact to ATP.

Belongs to the cytidylate kinase family. Type 1 subfamily.

The protein localises to the cytoplasm. The catalysed reaction is CMP + ATP = CDP + ADP. It catalyses the reaction dCMP + ATP = dCDP + ADP. This Alkaliphilus metalliredigens (strain QYMF) protein is Cytidylate kinase.